The sequence spans 1237 residues: Glutamate receptor ionotropic, NMDA 2C (1237 aa).

The signal sequence occupies residues 1–19 (MGGALGPALLLTSLLGAWA). Residues 20–554 (RLGAGQGEQA…SAFLEPYSPA (535 aa)) lie on the Extracellular side of the membrane. Residues N70 and N73 are each glycosylated (N-linked (GlcNAc...) asparagine). A disulfide bond links C82 and C317. N-linked (GlcNAc...) asparagine glycosylation is found at N337 and N438. Cystine bridges form between C426/C453 and C433/C454. The L-glutamate site is built by S509, T511, and R516. N-linked (GlcNAc...) asparagine glycosylation is present at N539. Residues 555-575 (VWVMMFVMCLTVVAITVFMFE) form a helical membrane-spanning segment. Over 576-601 (YFSPVSYNQNLTKGKKPGGPSFTIGK) the chain is Cytoplasmic. Residues 601 to 620 (KSVWLLWALVFNNSVPIENP) form a pore-forming region. The discontinuously helical intramembrane region spans 602 to 611 (SVWLLWALVF). The Cytoplasmic portion of the chain corresponds to 612-622 (NNSVPIENPRG). Residues 623–644 (TTSKIMVLVWAFFAVIFLASYT) form a helical membrane-spanning segment. The Extracellular segment spans residues 645 to 813 (ANLAAFMIQE…EVMSSKLDID (169 aa)). N685 carries an N-linked (GlcNAc...) asparagine glycan. 3 residues coordinate L-glutamate: S687, T688, and D729. A disulfide bond links C743 and C798. The chain crosses the membrane as a helical span at residues 814-833 (NMAGVFYMLLVAMGLALLVF). Residues 834–1237 (AWEHLVYWKL…RRVSSLESEV (404 aa)) lie on the Cytoplasmic side of the membrane. S875, S881, and S912 each carry phosphoserine. The segment covering 907–925 (ADVSSSLDRATRTIENWGN) has biased composition (polar residues). Positions 907–990 (ADVSSSLDRA…LPDVSRPSCR (84 aa)) are disordered. The segment covering 930–941 (PAPTASGPRSST) has biased composition (low complexity). A compositionally biased stretch (pro residues) spans 968-982 (PQPPARPATCGPPLP). Residues 1235–1237 (SEV) carry the PDZ-binding motif.

It belongs to the glutamate-gated ion channel (TC 1.A.10.1) family. NR2C/GRIN2C subfamily. In terms of assembly, heterotetramer. Forms heterotetrameric channels composed of two GluN1/zeta subunits (GRIN1), and two identical GluN2/epsilon subunits (GRIN2A, GRIN2B, GRIN2C or GRIN2D) or GluN3 subunits (GRIN3A or GRIN3B) (in vitro). In vivo, the subunit composition may depend on the expression levels of the different subunits. Interacts with PDZ domains of PATJ and DLG4. Interacts (via PDZ-binding motif) with SNX27 (via PDZ domain); the interaction is required for recycling to the plasma membrane when endocytosed and prevent degradation in lysosomes. In terms of tissue distribution, detected in cerebellum.

The protein localises to the cell membrane. It localises to the postsynaptic cell membrane. It carries out the reaction Ca(2+)(in) = Ca(2+)(out). The enzyme catalyses Na(+)(in) = Na(+)(out). It catalyses the reaction K(+)(in) = K(+)(out). Functionally, component of N-methyl-D-aspartate (NMDA) receptors (NMDARs) that function as heterotetrameric, ligand-gated cation channels with high calcium permeability and voltage-dependent block by Mg(2+). Participates in synaptic plasticity for learning and memory formation by contributing to the slow phase of excitatory postsynaptic current and long-term synaptic potentiation. Channel activation requires binding of the neurotransmitter L-glutamate to the GluN2 subunit, glycine or D-serine binding to the GluN1 subunit, plus membrane depolarization to eliminate channel inhibition by Mg(2+). NMDARs mediate simultaneously the potasium efflux and the influx of calcium and sodium. Each GluN2 subunit confers differential attributes to channel properties, including activation, deactivation and desensitization kinetics, pH sensitivity, Ca2(+) permeability, and binding to allosteric modulators. This is Glutamate receptor ionotropic, NMDA 2C from Rattus norvegicus (Rat).